Consider the following 519-residue polypeptide: Sensory neuron membrane protein 2 (519 aa).

Residues M1–K7 lie on the Cytoplasmic side of the membrane. Residues L8–F28 traverse the membrane as a helical segment. The Extracellular segment spans residues P29 to Q469. N44, N67, N104, N166, N229, N272, and N314 each carry an N-linked (GlcNAc...) asparagine glycan. 3 disulfides stabilise this stretch: C268-C338, C299-C362, and C340-C351. A helical transmembrane segment spans residues L470 to V490. The Cytoplasmic portion of the chain corresponds to A491 to R519.

Belongs to the CD36 family. Localizes to both male and female antennae but not the leg, wing, gut, head or thoracic ganglia. Detected throughout the sensory epithelium, associating with both sex-pheromone sensilla and plant-volatile sensilla. Differentially expressed among different sensilla and different neurons within a given sensillum.

It localises to the cell membrane. Plays an olfactory role that is not restricted to pheromone sensitivity. The protein is Sensory neuron membrane protein 2 of Manduca sexta (Tobacco hawkmoth).